The chain runs to 260 residues: Flap endonuclease Xni (260 aa).

Residue Asp-104 coordinates Mg(2+). The region spanning 160–250 (VSPQQLTDYW…NGNLQQLRLP (91 aa)) is the 5'-3' exonuclease domain. Residues Leu-171, Ala-172, Pro-180, Val-182, and Ile-185 each coordinate K(+). An interaction with DNA region spans residues 184-189 (GIGPKS).

It belongs to the Xni family. Mg(2+) is required as a cofactor. K(+) serves as cofactor.

In terms of biological role, has flap endonuclease activity. During DNA replication, flap endonucleases cleave the 5'-overhanging flap structure that is generated by displacement synthesis when DNA polymerase encounters the 5'-end of a downstream Okazaki fragment. The sequence is that of Flap endonuclease Xni from Pectobacterium atrosepticum (strain SCRI 1043 / ATCC BAA-672) (Erwinia carotovora subsp. atroseptica).